We begin with the raw amino-acid sequence, 344 residues long: Prickle-like protein 4 (344 aa).

In terms of domain architecture, PET spans 1–81 (MSPQGPAVLS…ARLVLPKLEG (81 aa)). 2 LIM zinc-binding domains span residues 82–147 (HTCE…LLRP) and 148–207 (RCPA…RYSD). The disordered stretch occupies residues 253 to 344 (GSSLQTQRGL…NASKTHCTMC (92 aa)). Residues 257 to 271 (QTQRGLPGSSPQQEN) show a composition bias toward polar residues. Residues 272–296 (RPGDKAEAPKGQEQCRLETIRDPKD) are compositionally biased toward basic and acidic residues. The segment covering 322–344 (SWKTPGSLQAEDSNASKTHCTMC) has biased composition (polar residues).

Belongs to the prickle / espinas / testin family. In terms of tissue distribution, expressed in a broad range of normal tissues as well as in hepatocellular carcinoma, breast cancer and prostate cancer tissues.

This is Prickle-like protein 4 (PRICKLE4) from Homo sapiens (Human).